Reading from the N-terminus, the 256-residue chain is Pimeloyl-[acyl-carrier protein] methyl ester esterase (256 aa).

Positions 16-240 (LVILHGWGVN…PKASHAPFLS (225 aa)) constitute an AB hydrolase-1 domain. Substrate-binding positions include Trp-22, 80-81 (SL), and 143-147 (FLAIQ). Ser-80 acts as the Nucleophile in catalysis. Active-site residues include Asp-207 and His-235. A substrate-binding site is contributed by His-235.

The protein belongs to the AB hydrolase superfamily. Carboxylesterase BioH family. In terms of assembly, monomer.

Its subcellular location is the cytoplasm. The catalysed reaction is 6-carboxyhexanoyl-[ACP] methyl ester + H2O = 6-carboxyhexanoyl-[ACP] + methanol + H(+). It functions in the pathway cofactor biosynthesis; biotin biosynthesis. Its function is as follows. The physiological role of BioH is to remove the methyl group introduced by BioC when the pimeloyl moiety is complete. It allows to synthesize pimeloyl-ACP via the fatty acid synthetic pathway through the hydrolysis of the ester bonds of pimeloyl-ACP esters. The protein is Pimeloyl-[acyl-carrier protein] methyl ester esterase of Shewanella woodyi (strain ATCC 51908 / MS32).